A 233-amino-acid polypeptide reads, in one-letter code: ATP-dependent Clp protease proteolytic subunit 1 (233 aa).

Residue serine 116 is the Nucleophile of the active site. Histidine 141 is an active-site residue.

The protein belongs to the peptidase S14 family. Fourteen ClpP subunits assemble into 2 heptameric rings which stack back to back to give a disk-like structure with a central cavity, resembling the structure of eukaryotic proteasomes.

Its subcellular location is the cytoplasm. The enzyme catalyses Hydrolysis of proteins to small peptides in the presence of ATP and magnesium. alpha-casein is the usual test substrate. In the absence of ATP, only oligopeptides shorter than five residues are hydrolyzed (such as succinyl-Leu-Tyr-|-NHMec, and Leu-Tyr-Leu-|-Tyr-Trp, in which cleavage of the -Tyr-|-Leu- and -Tyr-|-Trp bonds also occurs).. Functionally, cleaves peptides in various proteins in a process that requires ATP hydrolysis. Has a chymotrypsin-like activity. Plays a major role in the degradation of misfolded proteins. In Salinibacter ruber (strain DSM 13855 / M31), this protein is ATP-dependent Clp protease proteolytic subunit 1.